Here is a 179-residue protein sequence, read N- to C-terminus: Large ribosomal subunit protein uL5 (179 aa).

This sequence belongs to the universal ribosomal protein uL5 family. In terms of assembly, part of the 50S ribosomal subunit; part of the 5S rRNA/L5/L18/L25 subcomplex. Contacts the 5S rRNA and the P site tRNA. Forms a bridge to the 30S subunit in the 70S ribosome.

Its function is as follows. This is one of the proteins that bind and probably mediate the attachment of the 5S RNA into the large ribosomal subunit, where it forms part of the central protuberance. In the 70S ribosome it contacts protein S13 of the 30S subunit (bridge B1b), connecting the 2 subunits; this bridge is implicated in subunit movement. Contacts the P site tRNA; the 5S rRNA and some of its associated proteins might help stabilize positioning of ribosome-bound tRNAs. The protein is Large ribosomal subunit protein uL5 of Mannheimia succiniciproducens (strain KCTC 0769BP / MBEL55E).